A 111-amino-acid chain; its full sequence is Cytochrome c oxidase subunit 6A1, mitochondrial (111 aa).

A mitochondrion-targeting transit peptide spans 1–26 (MASAVLSASRVSRPLGRALPGLRRPM). Residues 27–36 (SSGAHGEEGS) lie on the Mitochondrial matrix side of the membrane. Residues 37–61 (ARMWKALTYFVALPGVGVSMLNVFL) traverse the membrane as a helical segment. Residues 62–111 (KSRHEEHERPPFVAYPHLRIRTKPFPWGDGNHTLFHNPHVNPLPTGYEDE) are Mitochondrial intermembrane-facing.

This sequence belongs to the cytochrome c oxidase subunit 6A family. In terms of assembly, component of the cytochrome c oxidase (complex IV, CIV), a multisubunit enzyme composed of 14 subunits. The complex is composed of a catalytic core of 3 subunits MT-CO1, MT-CO2 and MT-CO3, encoded in the mitochondrial DNA, and 11 supernumerary subunits COX4I, COX5A, COX5B, COX6A, COX6B, COX6C, COX7A, COX7B, COX7C, COX8 and NDUFA4, which are encoded in the nuclear genome. The complex exists as a monomer or a dimer and forms supercomplexes (SCs) in the inner mitochondrial membrane with NADH-ubiquinone oxidoreductase (complex I, CI) and ubiquinol-cytochrome c oxidoreductase (cytochrome b-c1 complex, complex III, CIII), resulting in different assemblies (supercomplex SCI(1)III(2)IV(1) and megacomplex MCI(2)III(2)IV(2)).

The protein resides in the mitochondrion inner membrane. Its pathway is energy metabolism; oxidative phosphorylation. In terms of biological role, component of the cytochrome c oxidase, the last enzyme in the mitochondrial electron transport chain which drives oxidative phosphorylation. The respiratory chain contains 3 multisubunit complexes succinate dehydrogenase (complex II, CII), ubiquinol-cytochrome c oxidoreductase (cytochrome b-c1 complex, complex III, CIII) and cytochrome c oxidase (complex IV, CIV), that cooperate to transfer electrons derived from NADH and succinate to molecular oxygen, creating an electrochemical gradient over the inner membrane that drives transmembrane transport and the ATP synthase. Cytochrome c oxidase is the component of the respiratory chain that catalyzes the reduction of oxygen to water. Electrons originating from reduced cytochrome c in the intermembrane space (IMS) are transferred via the dinuclear copper A center (CU(A)) of subunit 2 and heme A of subunit 1 to the active site in subunit 1, a binuclear center (BNC) formed by heme A3 and copper B (CU(B)). The BNC reduces molecular oxygen to 2 water molecules unsing 4 electrons from cytochrome c in the IMS and 4 protons from the mitochondrial matrix. The polypeptide is Cytochrome c oxidase subunit 6A1, mitochondrial (Cox6a1) (Mus musculus (Mouse)).